A 114-amino-acid polypeptide reads, in one-letter code: NTGGKAPRKHIAHKQAKKSSAAAATGGVKKPHRFRPGTVALREIRRFQKSTELLIRKLPFQRLVREIASEFKNDLRFQSSAVLALQEASEAYLVGLFEDTNLCAIHAKRVTIMP.

Residues 1–17 (NTGGKAPRKHIAHKQAK) are compositionally biased toward basic residues. Residues 1–32 (NTGGKAPRKHIAHKQAKKSSAAAATGGVKKPH) form a disordered region. Residues 18-28 (KSSAAAATGGV) show a composition bias toward low complexity.

It belongs to the histone H3 family. The nucleosome is a histone octamer containing two molecules each of H2A, H2B, H3 and H4 assembled in one H3-H4 heterotetramer and two H2A-H2B heterodimers. The octamer wraps approximately 147 bp of DNA.

It is found in the nucleus. Its subcellular location is the chromosome. Its function is as follows. Core component of nucleosome. Nucleosomes wrap and compact DNA into chromatin, limiting DNA accessibility to the cellular machineries which require DNA as a template. Histones thereby play a central role in transcription regulation, DNA repair, DNA replication and chromosomal stability. DNA accessibility is regulated via a complex set of post-translational modifications of histones, also called histone code, and nucleosome remodeling. The chain is Histone H3-3 (H3-3) from Stylonychia lemnae (Ciliate).